We begin with the raw amino-acid sequence, 250 residues long: 5-oxoprolinase subunit A (250 aa).

This sequence belongs to the LamB/PxpA family. Forms a complex composed of PxpA, PxpB and PxpC.

It catalyses the reaction 5-oxo-L-proline + ATP + 2 H2O = L-glutamate + ADP + phosphate + H(+). Functionally, catalyzes the cleavage of 5-oxoproline to form L-glutamate coupled to the hydrolysis of ATP to ADP and inorganic phosphate. The polypeptide is 5-oxoprolinase subunit A (Streptomyces coelicolor (strain ATCC BAA-471 / A3(2) / M145)).